The sequence spans 240 residues: Phosphoribosylaminoimidazole-succinocarboxamide synthase (240 aa).

Belongs to the SAICAR synthetase family.

The enzyme catalyses 5-amino-1-(5-phospho-D-ribosyl)imidazole-4-carboxylate + L-aspartate + ATP = (2S)-2-[5-amino-1-(5-phospho-beta-D-ribosyl)imidazole-4-carboxamido]succinate + ADP + phosphate + 2 H(+). It participates in purine metabolism; IMP biosynthesis via de novo pathway; 5-amino-1-(5-phospho-D-ribosyl)imidazole-4-carboxamide from 5-amino-1-(5-phospho-D-ribosyl)imidazole-4-carboxylate: step 1/2. The chain is Phosphoribosylaminoimidazole-succinocarboxamide synthase from Wolbachia pipientis subsp. Culex pipiens (strain wPip).